A 103-amino-acid polypeptide reads, in one-letter code: Large ribosomal subunit protein bL21 (103 aa).

This sequence belongs to the bacterial ribosomal protein bL21 family. In terms of assembly, part of the 50S ribosomal subunit. Contacts protein L20.

This protein binds to 23S rRNA in the presence of protein L20. The sequence is that of Large ribosomal subunit protein bL21 from Vibrio cholerae serotype O1 (strain ATCC 39541 / Classical Ogawa 395 / O395).